The sequence spans 47 residues: Defensin-like protein 1 (47 aa).

Disulfide bonds link Cys-5–Cys-47, Cys-16–Cys-36, Cys-22–Cys-43, and Cys-26–Cys-45.

The protein belongs to the DEFL family.

In terms of biological role, fabatins have antibacterial activity against Gram-positive and Gram-negative bacteria. High activity against P.aeruginosa. No activity against S.cerevisiae and C.albicans. This chain is Defensin-like protein 1, found in Vicia faba (Broad bean).